The chain runs to 293 residues: Fructose-bisphosphate aldolase (293 aa).

S50 is a binding site for D-glyceraldehyde 3-phosphate. D85 (proton donor) is an active-site residue. Residues H86, D106, E136, and H178 each contribute to the Zn(2+) site. Residue G179 participates in dihydroxyacetone phosphate binding. H208 is a Zn(2+) binding site. Dihydroxyacetone phosphate-binding positions include 209-211 (GGS) and 230-233 (NVNT).

The protein belongs to the class II fructose-bisphosphate aldolase family. The cofactor is Zn(2+).

The catalysed reaction is beta-D-fructose 1,6-bisphosphate = D-glyceraldehyde 3-phosphate + dihydroxyacetone phosphate. It participates in carbohydrate degradation; glycolysis; D-glyceraldehyde 3-phosphate and glycerone phosphate from D-glucose: step 4/4. Catalyzes the aldol condensation of dihydroxyacetone phosphate (DHAP or glycerone-phosphate) with glyceraldehyde 3-phosphate (G3P) to form fructose 1,6-bisphosphate (FBP) in gluconeogenesis and the reverse reaction in glycolysis. This is Fructose-bisphosphate aldolase (fba) from Streptococcus pyogenes serotype M6 (strain ATCC BAA-946 / MGAS10394).